The sequence spans 278 residues: Putative cysteine-rich repeat secretory protein 17 (278 aa).

A signal peptide spans 1–32; sequence MYSLSSVSKHLILVHILALVATQLLLIRSVSS. Gnk2-homologous domains follow at residues 39–142 and 148–265; these read YLNH…SIDN and YGDS…LYPF.

Belongs to the cysteine-rich repeat secretory protein family.

The protein resides in the secreted. The polypeptide is Putative cysteine-rich repeat secretory protein 17 (CRRSP17) (Arabidopsis thaliana (Mouse-ear cress)).